A 489-amino-acid polypeptide reads, in one-letter code: Lysine--tRNA ligase (489 aa).

2 residues coordinate Mg(2+): glutamate 399 and glutamate 406.

It belongs to the class-II aminoacyl-tRNA synthetase family. As to quaternary structure, homodimer. Mg(2+) serves as cofactor.

Its subcellular location is the cytoplasm. It catalyses the reaction tRNA(Lys) + L-lysine + ATP = L-lysyl-tRNA(Lys) + AMP + diphosphate. This Mycoplasma pneumoniae (strain ATCC 29342 / M129 / Subtype 1) (Mycoplasmoides pneumoniae) protein is Lysine--tRNA ligase (lysS).